The chain runs to 233 residues: Antigenic membrane protein (233 aa).

The signal sequence occupies residues 1–32; sequence MQNQKNQKSLVAKVLVLFAAVALMFVGVQVFA. Residues 206–226 traverse the membrane as a helical segment; the sequence is FLTLVAVVVVAAVAGGVFFFV.

Its subcellular location is the cell membrane. This Onion yellows phytoplasma (strain OY-M) protein is Antigenic membrane protein (amp).